Here is a 504-residue protein sequence, read N- to C-terminus: Maturase K (504 aa).

It belongs to the intron maturase 2 family. MatK subfamily.

It localises to the plastid. It is found in the chloroplast. Functionally, usually encoded in the trnK tRNA gene intron. Probably assists in splicing its own and other chloroplast group II introns. This Prionotes cerinthoides (Climbing heath) protein is Maturase K.